A 264-amino-acid polypeptide reads, in one-letter code: MFSGEGASQIRIAPEDKPIQWCYQILKSRDFKSARYITQMNLKLSKTRHDEYEKGLAICDILIAAENRLPNGLLDCYGMIRMTRPGLVLYQNIEKELNLLGWGNISNPFPFRQEASEKFFFAWSLLSNPTIKEMYDYATSDEVNLEPQGNVNEYMDVDSSSQSGYGLGSVLCSDLPGSEYLKEFADVYPLPLAEKGQAPHNRFGWYDHNVGPETNNNVVVTYEDAKEEECDMSSSSELRIINGRRVKITIEEAAETSDTPSCSR.

In terms of tissue distribution, paternally imprinted expression in the endosperm.

Its function is as follows. Product of a dosage-sensitive gene that contributes to the maintenance of paternally and maternally imprinted gene expression in the endosperm in order to balance parental contributions. Underlies postzygotic reproductive isolation by promoting triploid seed arrest in a genetic dosage-dependent manner, thus being a component of postzygotic interploidy hybridization barriers. The chain is Protein ADMETOS from Arabidopsis thaliana (Mouse-ear cress).